The primary structure comprises 154 residues: MPVPLAPYPTPPAPALAPSYNTPPANGSTSGQSQLVCSGCRNLLMYPVGATSVCCAVCNAVTAVPPPGTEMAQLVCGGCHTLLMYIRGATSVQCSCCHTVNLALEANQVAHVNCGNCMMLLMYQYGARSVKCAVCNFVTSVGGSTSTTDSKFNN.

Putative zinc finger regions lie at residues 34 to 64 (QLVC…VTAV), 73 to 103 (QLVC…VNLA), and 111 to 141 (HVNC…VTSV).

It is found in the nucleus. Functionally, positive regulator of reactive oxygen-induced cell death. May be involved in the repression of the copper/zinc superoxide dismutase CSD1 and CSD2 that detoxify accumulating superoxide before the reactive oxygen species (ROS) can trigger a cell death cascade. LSD1 and LOL1 have antagonistic effects on CSD1 and CSD2 accumulation to regulate oxidative stress-induced cell death. In Arabidopsis thaliana (Mouse-ear cress), this protein is Protein LOL1 (LOL1).